The sequence spans 148 residues: UPF0756 membrane protein YeaL (148 aa).

4 consecutive transmembrane segments (helical) span residues 14-34 (ALGF…LIIV), 51-71 (LTIG…SGSL), 80-100 (FFNW…WLGG), and 121-141 (VLGV…AGLV).

This sequence belongs to the UPF0756 family.

The protein resides in the cell membrane. In Escherichia fergusonii (strain ATCC 35469 / DSM 13698 / CCUG 18766 / IAM 14443 / JCM 21226 / LMG 7866 / NBRC 102419 / NCTC 12128 / CDC 0568-73), this protein is UPF0756 membrane protein YeaL.